The chain runs to 146 residues: Globin (146 aa).

N-acetylserine is present on serine 1. The 146-residue stretch at 1-146 folds into the Globin domain; sequence SLSGAEADLL…IIDALKKAGK (146 aa). Histidine 95 provides a ligand contact to heme b.

It belongs to the globin family. Monomer.

The protein is Globin of Bursatella leachii (Ragged sea hare).